The primary structure comprises 877 residues: ABC transporter A family member 1 (877 aa).

A run of 7 helical transmembrane segments spans residues 46-66 (YFSTGIEILSPIAFIIILFLI), 268-288 (VWGGLFYYCGSMISFIFLLYK), 324-344 (ILISLITIIVGLACQLPFFLG), 347-367 (FFVLIITFSLFTISMSSVAFF), 379-399 (IGIGMGIFIVGSIFQLVFSGM), 420-440 (IILFFIPMFHFTKVLTDIGNV), and 479-499 (LLALIGVYTVLAWYFEHIIPG). An ABC transporter domain is found at 552–788 (LIICGLSKSY…YGEGYSVNIV (237 aa)). Residue 591-598 (GSNGCGKS) participates in ATP binding.

Belongs to the ABC transporter superfamily. ABCA family.

The protein localises to the membrane. The polypeptide is ABC transporter A family member 1 (abcA1) (Dictyostelium discoideum (Social amoeba)).